The following is a 499-amino-acid chain: 3-beta-hydroxylase (499 aa).

The helical; Signal-anchor for type II membrane protein transmembrane segment at 2–22 (FSSFETLILSFVSLFFMMIFI) threads the bilayer. Heme is bound at residue Cys-441.

The protein belongs to the cytochrome P450 family. Requires heme as cofactor.

The protein resides in the membrane. The enzyme catalyses (+)-costunolide + reduced [NADPH--hemoprotein reductase] + O2 = 3beta-hydroxycostunolide + oxidized [NADPH--hemoprotein reductase] + H2O + H(+). The catalysed reaction is parthenolide + reduced [NADPH--hemoprotein reductase] + O2 = 3beta-hydroxyparthenolide + oxidized [NADPH--hemoprotein reductase] + H2O + H(+). It functions in the pathway secondary metabolite biosynthesis; terpenoid biosynthesis. Its function is as follows. Involved in the biosynthesis of germacrene-derived sesquiterpene lactones. Component of the parthenolide biosynthetic pathway; parthenolide and conjugates are promising anti-cancer drugs highly active against colon cancer cells. Catalyzes the conversion of costunolide and parthenolide to 3-beta-hydroxycostunolide and 3-beta-hydroxyparthenolide, respectively. The protein is 3-beta-hydroxylase of Tanacetum parthenium (Feverfew).